A 361-amino-acid chain; its full sequence is Chorismate synthase (361 aa).

2 residues coordinate NADP(+): Arg48 and Arg54. Residues Arg125–Ser127, Asn238–Ala239, Gly278, Lys293–Ser297, and Arg319 each bind FMN.

Belongs to the chorismate synthase family. As to quaternary structure, homotetramer. Requires FMNH2 as cofactor.

It carries out the reaction 5-O-(1-carboxyvinyl)-3-phosphoshikimate = chorismate + phosphate. Its pathway is metabolic intermediate biosynthesis; chorismate biosynthesis; chorismate from D-erythrose 4-phosphate and phosphoenolpyruvate: step 7/7. In terms of biological role, catalyzes the anti-1,4-elimination of the C-3 phosphate and the C-6 proR hydrogen from 5-enolpyruvylshikimate-3-phosphate (EPSP) to yield chorismate, which is the branch point compound that serves as the starting substrate for the three terminal pathways of aromatic amino acid biosynthesis. This reaction introduces a second double bond into the aromatic ring system. The polypeptide is Chorismate synthase (Yersinia enterocolitica serotype O:8 / biotype 1B (strain NCTC 13174 / 8081)).